The following is a 319-amino-acid chain: Acetyl-coenzyme A carboxylase carboxyl transferase subunit alpha (319 aa).

A CoA carboxyltransferase C-terminal domain is found at 35–296 (NLDEEVQRLR…KAQLLDDLSE (262 aa)).

It belongs to the AccA family. Acetyl-CoA carboxylase is a heterohexamer composed of biotin carboxyl carrier protein (AccB), biotin carboxylase (AccC) and two subunits each of ACCase subunit alpha (AccA) and ACCase subunit beta (AccD).

It localises to the cytoplasm. The enzyme catalyses N(6)-carboxybiotinyl-L-lysyl-[protein] + acetyl-CoA = N(6)-biotinyl-L-lysyl-[protein] + malonyl-CoA. It participates in lipid metabolism; malonyl-CoA biosynthesis; malonyl-CoA from acetyl-CoA: step 1/1. Functionally, component of the acetyl coenzyme A carboxylase (ACC) complex. First, biotin carboxylase catalyzes the carboxylation of biotin on its carrier protein (BCCP) and then the CO(2) group is transferred by the carboxyltransferase to acetyl-CoA to form malonyl-CoA. The polypeptide is Acetyl-coenzyme A carboxylase carboxyl transferase subunit alpha (Sodalis glossinidius (strain morsitans)).